The primary structure comprises 424 residues: Adenylosuccinate synthetase (424 aa).

Residues 12 to 18 (GDEGKGK) and 40 to 42 (GHT) contribute to the GTP site. D13 serves as the catalytic Proton acceptor. Mg(2+) is bound by residues D13 and G40. IMP is bound by residues 13–16 (DEGK), 38–41 (NAGH), T130, R144, N220, T235, and R299. H41 acts as the Proton donor in catalysis. A substrate-binding site is contributed by 295–301 (VTTGRKR). GTP-binding positions include R301, 327-329 (KLD), and 412-414 (GTG).

Belongs to the adenylosuccinate synthetase family. As to quaternary structure, homodimer. It depends on Mg(2+) as a cofactor.

It localises to the cytoplasm. It carries out the reaction IMP + L-aspartate + GTP = N(6)-(1,2-dicarboxyethyl)-AMP + GDP + phosphate + 2 H(+). The protein operates within purine metabolism; AMP biosynthesis via de novo pathway; AMP from IMP: step 1/2. Its function is as follows. Plays an important role in the de novo pathway and in the salvage pathway of purine nucleotide biosynthesis. Catalyzes the first committed step in the biosynthesis of AMP from IMP. The protein is Adenylosuccinate synthetase (adB) of Emericella nidulans (strain FGSC A4 / ATCC 38163 / CBS 112.46 / NRRL 194 / M139) (Aspergillus nidulans).